The following is a 207-amino-acid chain: Putative 3-methyladenine DNA glycosylase (207 aa).

This sequence belongs to the DNA glycosylase MPG family.

In Listeria monocytogenes serovar 1/2a (strain ATCC BAA-679 / EGD-e), this protein is Putative 3-methyladenine DNA glycosylase.